A 432-amino-acid polypeptide reads, in one-letter code: Adenylosuccinate synthetase (432 aa).

Residues 13–19 (GDEGKGK) and 41–43 (GHT) contribute to the GTP site. The active-site Proton acceptor is Asp-14. 2 residues coordinate Mg(2+): Asp-14 and Gly-41. IMP contacts are provided by residues 14 to 17 (DEGK), 39 to 42 (NAGH), Thr-130, Arg-144, Gln-225, Thr-240, and Arg-304. His-42 functions as the Proton donor in the catalytic mechanism. Substrate is bound at residue 300-306 (ATTGRRR). GTP contacts are provided by residues Arg-306, 332–334 (KLD), and 415–417 (STG).

It belongs to the adenylosuccinate synthetase family. In terms of assembly, homodimer. Mg(2+) serves as cofactor.

The protein localises to the cytoplasm. It carries out the reaction IMP + L-aspartate + GTP = N(6)-(1,2-dicarboxyethyl)-AMP + GDP + phosphate + 2 H(+). Its pathway is purine metabolism; AMP biosynthesis via de novo pathway; AMP from IMP: step 1/2. Functionally, plays an important role in the de novo pathway of purine nucleotide biosynthesis. Catalyzes the first committed step in the biosynthesis of AMP from IMP. This chain is Adenylosuccinate synthetase, found in Shigella flexneri serotype 5b (strain 8401).